The sequence spans 278 residues: Putative transposase for insertion sequence element IS986/IS6110 (278 aa).

One can recognise an Integrase catalytic domain in the interval 101–268 (GPPAPNRLWV…VPPVELEAAY (168 aa)).

Its function is as follows. Involved in the transposition of the insertion sequence. The sequence is that of Putative transposase for insertion sequence element IS986/IS6110 from Mycobacterium tuberculosis (strain CDC 1551 / Oshkosh).